We begin with the raw amino-acid sequence, 100 residues long: Small ribosomal subunit protein uS14c (100 aa).

It belongs to the universal ribosomal protein uS14 family. In terms of assembly, part of the 30S ribosomal subunit.

The protein localises to the plastid. Its subcellular location is the chloroplast. Binds 16S rRNA, required for the assembly of 30S particles. The sequence is that of Small ribosomal subunit protein uS14c from Thalassiosira pseudonana (Marine diatom).